A 177-amino-acid chain; its full sequence is Inner membrane-spanning protein YciB (177 aa).

The next 5 membrane-spanning stretches (helical) occupy residues 22–42 (IFIA…IHWI), 50–70 (ISLF…FFHN), 76–96 (WKIT…QFFT), 121–141 (FIWS…AYYF), and 149–169 (FKVF…SIYI).

It belongs to the YciB family.

It is found in the cell inner membrane. Plays a role in cell envelope biogenesis, maintenance of cell envelope integrity and membrane homeostasis. This chain is Inner membrane-spanning protein YciB, found in Buchnera aphidicola subsp. Acyrthosiphon pisum (strain APS) (Acyrthosiphon pisum symbiotic bacterium).